Here is a 216-residue protein sequence, read N- to C-terminus: UPF0502 protein Smal_0052 (216 aa).

It belongs to the UPF0502 family.

The sequence is that of UPF0502 protein Smal_0052 from Stenotrophomonas maltophilia (strain R551-3).